Reading from the N-terminus, the 258-residue chain is Imidazole glycerol phosphate synthase subunit HisF (258 aa).

Active-site residues include Asp11 and Asp130.

It belongs to the HisA/HisF family. As to quaternary structure, heterodimer of HisH and HisF.

Its subcellular location is the cytoplasm. It catalyses the reaction 5-[(5-phospho-1-deoxy-D-ribulos-1-ylimino)methylamino]-1-(5-phospho-beta-D-ribosyl)imidazole-4-carboxamide + L-glutamine = D-erythro-1-(imidazol-4-yl)glycerol 3-phosphate + 5-amino-1-(5-phospho-beta-D-ribosyl)imidazole-4-carboxamide + L-glutamate + H(+). It participates in amino-acid biosynthesis; L-histidine biosynthesis; L-histidine from 5-phospho-alpha-D-ribose 1-diphosphate: step 5/9. IGPS catalyzes the conversion of PRFAR and glutamine to IGP, AICAR and glutamate. The HisF subunit catalyzes the cyclization activity that produces IGP and AICAR from PRFAR using the ammonia provided by the HisH subunit. The chain is Imidazole glycerol phosphate synthase subunit HisF from Escherichia coli O7:K1 (strain IAI39 / ExPEC).